The sequence spans 256 residues: Small ribosomal subunit protein eS1 (256 aa).

The residue at position 2 (A2) is an N-acetylalanine; partial.

This sequence belongs to the eukaryotic ribosomal protein eS1 family. In terms of assembly, component of the small ribosomal subunit. Mature ribosomes consist of a small (40S) and a large (60S) subunit. The 40S subunit contains about 33 different proteins and 1 molecule of RNA (18S). The 60S subunit contains about 49 different proteins and 3 molecules of RNA (25S, 5.8S and 5S).

It is found in the cytoplasm. This chain is Small ribosomal subunit protein eS1, found in Lachancea thermotolerans (strain ATCC 56472 / CBS 6340 / NRRL Y-8284) (Yeast).